Here is a 756-residue protein sequence, read N- to C-terminus: Serine/threonine-protein kinase DCLK1 (756 aa).

Residues Ser-32 and Ser-36 each carry the phosphoserine modification. Thr-46 is subject to Phosphothreonine. Doublecortin domains lie at 57–143 and 186–269; these read KKVR…LEYT and KLVT…QDDF. The tract at residues 288–393 is disordered; sequence ASASRRGTTK…QRGWRREESE (106 aa). Low complexity predominate over residues 297 to 313; it reads KSPGPSRRSKSPASTSS. A phosphoserine mark is found at Ser-305, Ser-307, Ser-330, Ser-332, Ser-334, Ser-337, Ser-347, Ser-352, Ser-353, Ser-355, Ser-358, Cys-362, and Ser-364. Residues 347-364 are compositionally biased toward low complexity; that stretch reads SQHGGSSTSLSSTKVCSS. The segment covering 366 to 375 has biased composition (acidic residues); sequence DENDGPGEGD. Ser-392 is modified (phosphoserine). One can recognise a Protein kinase domain in the interval 406–663; that stretch reads YKVGRTIGDG…AVQVLEHPWV (258 aa). Residues 412-420 and Lys-435 contribute to the ATP site; that span reads IGDGNFAVV. Asp-527 (proton acceptor) is an active-site residue. Tyr-536 carries the phosphotyrosine modification. A compositionally biased stretch (basic and acidic residues) spans 711–723; that stretch reads QVFRRRRNQDVRS. A disordered region spans residues 711-756; it reads QVFRRRRNQDVRSRYKAQPAPPELNSESEDYSPSSSETVRSPNSPF. Ser-742, Ser-751, and Ser-754 each carry phosphoserine.

The protein belongs to the protein kinase superfamily. CAMK Ser/Thr protein kinase family. CaMK subfamily.

It catalyses the reaction L-seryl-[protein] + ATP = O-phospho-L-seryl-[protein] + ADP + H(+). The catalysed reaction is L-threonyl-[protein] + ATP = O-phospho-L-threonyl-[protein] + ADP + H(+). Probable kinase that may be involved in a calcium-signaling pathway controlling neuronal migration in the developing brain. May also participate in functions of the mature nervous system. This Mus musculus (Mouse) protein is Serine/threonine-protein kinase DCLK1 (Dclk1).